A 424-amino-acid chain; its full sequence is MKYQKPKGTADILPPFSKEWQFVEQNARETFALYNYEEIRTPIFEKFEVFSRSAGDTSDIVTKEMYDFDDKGGRHIALRPEGTAGVVRAFVENKLYGPEHQKPVKVYYMGPMFRYERPQSGRLREFHQIGVEAFGSDSPKIDVETIMMGMDFLKKLKVSGLKLVINTLGDKESRDRYRQALIDYLEPHFEELSDDSKARLHKNPLRVLDSKDKNDQKIVENAPEILDFLTEDAQKHFTSVKEELDTLGVDYVVDSSMVRGLDYYNHTIFEIMIADSPLGKGDVTICAGGRYNGLVEELGGPEVSGVGFGLGVERLLLLLNAETQTTLQSKQLDFYVVGIGDLVQNDVLKVVHELRQMNFVTEQDYLDRKPKAQFKSADKLNAKYVVTIGESEMNDRIFKLKDMHSGEERTVALSEINTLKDLLK.

Belongs to the class-II aminoacyl-tRNA synthetase family. As to quaternary structure, homodimer.

The protein localises to the cytoplasm. The enzyme catalyses tRNA(His) + L-histidine + ATP = L-histidyl-tRNA(His) + AMP + diphosphate + H(+). The sequence is that of Histidine--tRNA ligase from Pediococcus pentosaceus (strain ATCC 25745 / CCUG 21536 / LMG 10740 / 183-1w).